A 423-amino-acid chain; its full sequence is Glucose-1-phosphate adenylyltransferase (423 aa).

Residues tyrosine 108, glycine 173, glutamate 188–lysine 189, and serine 207 each bind alpha-D-glucose 1-phosphate.

This sequence belongs to the bacterial/plant glucose-1-phosphate adenylyltransferase family. Homotetramer.

It catalyses the reaction alpha-D-glucose 1-phosphate + ATP + H(+) = ADP-alpha-D-glucose + diphosphate. It functions in the pathway glycan biosynthesis; glycogen biosynthesis. Functionally, involved in the biosynthesis of ADP-glucose, a building block required for the elongation reactions to produce glycogen. Catalyzes the reaction between ATP and alpha-D-glucose 1-phosphate (G1P) to produce pyrophosphate and ADP-Glc. This Francisella tularensis subsp. tularensis (strain WY96-3418) protein is Glucose-1-phosphate adenylyltransferase.